The chain runs to 338 residues: Sesquiterpene synthase 1 (338 aa).

Mg(2+)-binding residues include Asp-93, Asn-228, Ser-232, and Glu-236. The short motif at 93 to 97 (DNISD) is the DDXXD motif element. Residues 228 to 236 (NDIFSYNVE) carry the NSE/DTE motif motif. Residues Arg-316 and Tyr-317 each contribute to the (2E,6E)-farnesyl diphosphate site.

This sequence belongs to the terpene synthase family. Requires Mg(2+) as cofactor.

The catalysed reaction is (2E,6E)-farnesyl diphosphate = alpha-copaene + diphosphate. It catalyses the reaction (2E,6E)-farnesyl diphosphate = beta-copaene + diphosphate. It carries out the reaction (2E,6E)-farnesyl diphosphate = alpha-muurolene + diphosphate. The enzyme catalyses (2E,6E)-farnesyl diphosphate = gamma-muurolene + diphosphate. The catalysed reaction is (2E,6E)-farnesyl diphosphate = delta-cadinene + diphosphate. Functionally, terpene cyclase that catalyzes the cyclization of farnesyl diphosphate (FPP) to various sesquiterpenes, including alpha-copaene, beta-copaene, beta-elemene, alpha-muurolene, gamma-muurolene and delta-cadinene. The protein is Sesquiterpene synthase 1 of Postia placenta (strain ATCC 44394 / Madison 698-R) (Brown rot fungus).